The following is a 466-amino-acid chain: Glutamate--tRNA ligase 1 (466 aa).

The short motif at 9–19 is the 'HIGH' region element; it reads PSPTGMLHIGG. The 'KMSKS' region motif lies at 238 to 242; the sequence is KLSKR. Lysine 241 contributes to the ATP binding site.

This sequence belongs to the class-I aminoacyl-tRNA synthetase family. Glutamate--tRNA ligase type 1 subfamily. In terms of assembly, monomer.

The protein resides in the cytoplasm. It carries out the reaction tRNA(Glu) + L-glutamate + ATP = L-glutamyl-tRNA(Glu) + AMP + diphosphate. Catalyzes the attachment of glutamate to tRNA(Glu) in a two-step reaction: glutamate is first activated by ATP to form Glu-AMP and then transferred to the acceptor end of tRNA(Glu). This chain is Glutamate--tRNA ligase 1, found in Acidiphilium cryptum (strain JF-5).